Reading from the N-terminus, the 405-residue chain is Scramblase ANY1 (405 aa).

Over 1 to 51 (MSTTGPLDATLIRDVAVATATKASYDMSDTLYSYLPKVDQFYIPEWLTMQF) the chain is Cytoplasmic. A helical membrane pass occupies residues 52–72 (IANNLISFTPLFSYGTTIISI). The Lumenal portion of the chain corresponds to 73-76 (EKCK). Residues 77–97 (TALGFSIDICATMLIASILRI) form a helical membrane-spanning segment. At 98–103 (SYYLIT) the chain is on the cytoplasmic side. Residues 104–124 (PYEITLLRQSLVMIFIQLILL) traverse the membrane as a helical segment. The Lumenal portion of the chain corresponds to 125–177 (RTSLKYRPDEYKYQNLTDVESLSHLIHDIWFEFFSCINRPKFLSEDWKNLIKS). A helical transmembrane segment spans residues 178–198 (LSFTNLLKFSFKIFLAFFYKI). Over 199-223 (LKFFDPNFKRIGAFWQWDDDKNFWR) the chain is Cytoplasmic. Residues 224 to 244 (FLALFATVQILVTFFISNILN) form a helical membrane-spanning segment. At 245–254 (WDSLAQGLGS) the chain is on the lumenal side. Residues 252-309 (LGSIIGSLGLLVESLLPLPQIAILYKLKSVQGFKLILLVSWLCGDTLKITYLIFGAKN) enclose the PQ-loop domain. Residues 255–275 (IIGSLGLLVESLLPLPQIAIL) form a helical membrane-spanning segment. The Cytoplasmic segment spans residues 276 to 283 (YKLKSVQG). The chain crosses the membrane as a helical span at residues 284–306 (FKLILLVSWLCGDTLKITYLIFG). Residues 307–312 (AKNISA) lie on the Lumenal side of the membrane. A helical membrane pass occupies residues 313–335 (LFVIFALFQMSLDFYIGGQYIYY). Topologically, residues 336-405 (RYYYPKLRHQ…GKSQAQAVTL (70 aa)) are cytoplasmic. Residues 379-405 (LKQDSNDTSDSPQDDQVGKSQAQAVTL) are disordered. Residues 396-405 (GKSQAQAVTL) are compositionally biased toward polar residues.

As to quaternary structure, interacts with NEO1.

The protein localises to the golgi apparatus membrane. It is found in the late endosome membrane. Functionally, phospholipid scramblase that transports phosphatidylserine (PS) and phosphatidylethalonamine (PE) bidirectionally from one leaflet to the other of the phospholipid bilayer to at least partially collapse the membrane asymmetry established by NEO1 and other flippases. The PS scramblase activity has been disputed. Functions in the trafficking pathway from endosomes to the trans-Golgi network (TGN). The polypeptide is Scramblase ANY1 (Saccharomyces cerevisiae (strain ATCC 204508 / S288c) (Baker's yeast)).